Reading from the N-terminus, the 440-residue chain is MSQMTPREIVHELDKHIVGQAEAKRAVAIALRNRWRRAQVGAPLRDEITPKNILMIGPTGVGKTEIARRLARLANAPFIKVEATKFTEVGYVGRDVESIIRDLTDAAIKMIRQTETAKVQSRAEAAAEERVLDALVPHASTWNAGEEGDSPARQKFRQKLRAGELNDKEIEIDVSAAPIGVEIMAPPGLEEMSSQLQNLFQNFQAGRTRTRKLRVRDALKLLKEEEAGKMINEEEIKLRAVHAVEQNGIVFLDELDKICKRADYGGPDVSREGVQRDLLPLVEGCTVSTKYGTIRTDHILFIASGAFHLAKPSDLIPELQGRFPIRVELNPLSADDFVRILTEPDASLTAQYAALLATEGVNLEFADSAIRRIAQISWEVNERTENIGARRLHTVLERLLEEISFDAADRSGTSITIDAGYVDAHLGSLALDEDLSRYIL.

ATP contacts are provided by residues Val-18, Gly-60–Glu-65, Asp-253, Glu-318, and Arg-390.

It belongs to the ClpX chaperone family. HslU subfamily. As to quaternary structure, a double ring-shaped homohexamer of HslV is capped on each side by a ring-shaped HslU homohexamer. The assembly of the HslU/HslV complex is dependent on binding of ATP.

The protein localises to the cytoplasm. ATPase subunit of a proteasome-like degradation complex; this subunit has chaperone activity. The binding of ATP and its subsequent hydrolysis by HslU are essential for unfolding of protein substrates subsequently hydrolyzed by HslV. HslU recognizes the N-terminal part of its protein substrates and unfolds these before they are guided to HslV for hydrolysis. The chain is ATP-dependent protease ATPase subunit HslU from Methylococcus capsulatus (strain ATCC 33009 / NCIMB 11132 / Bath).